A 455-amino-acid chain; its full sequence is ATP-dependent protease ATPase subunit HslU (455 aa).

ATP contacts are provided by residues valine 23, 65–70 (GVGKTE), aspartate 266, glutamate 333, and arginine 405.

The protein belongs to the ClpX chaperone family. HslU subfamily. As to quaternary structure, a double ring-shaped homohexamer of HslV is capped on each side by a ring-shaped HslU homohexamer. The assembly of the HslU/HslV complex is dependent on binding of ATP.

The protein resides in the cytoplasm. ATPase subunit of a proteasome-like degradation complex; this subunit has chaperone activity. The binding of ATP and its subsequent hydrolysis by HslU are essential for unfolding of protein substrates subsequently hydrolyzed by HslV. HslU recognizes the N-terminal part of its protein substrates and unfolds these before they are guided to HslV for hydrolysis. The protein is ATP-dependent protease ATPase subunit HslU of Xanthomonas axonopodis pv. citri (strain 306).